The following is a 208-amino-acid chain: Small ribosomal subunit protein uS4 (208 aa).

Positions R95–N157 constitute an S4 RNA-binding domain.

Belongs to the universal ribosomal protein uS4 family. As to quaternary structure, part of the 30S ribosomal subunit. Contacts protein S5. The interaction surface between S4 and S5 is involved in control of translational fidelity.

One of the primary rRNA binding proteins, it binds directly to 16S rRNA where it nucleates assembly of the body of the 30S subunit. In terms of biological role, with S5 and S12 plays an important role in translational accuracy. The protein is Small ribosomal subunit protein uS4 of Borrelia hermsii (strain HS1 / DAH).